A 119-amino-acid polypeptide reads, in one-letter code: Protein TusC (119 aa).

The protein belongs to the DsrF/TusC family. In terms of assembly, heterohexamer, formed by a dimer of trimers. The hexameric TusBCD complex contains 2 copies each of TusB, TusC and TusD. The TusBCD complex interacts with TusE.

Its subcellular location is the cytoplasm. Its function is as follows. Part of a sulfur-relay system required for 2-thiolation of 5-methylaminomethyl-2-thiouridine (mnm(5)s(2)U) at tRNA wobble positions. The polypeptide is Protein TusC (Shigella boydii serotype 18 (strain CDC 3083-94 / BS512)).